The chain runs to 589 residues: Serine/threonine-protein phosphatase 2A 65 kDa regulatory subunit A alpha isoform (589 aa).

Ala2 carries the post-translational modification N-acetylalanine. HEAT repeat units lie at residues 8–46 (DSLYPIAVLIDELRNEDVQLRLNSIKKLSTIALALGVER), 47–84 (TRSELLPFLTDTIYDEDEVLLALAEQLGTFTTLVGGPE), 85–123 (YVHCLLPPLESLATVEETVVRDKAVESLRAISHEHSPSD), 124–161 (LEAHFVPLVKRLAGGDWFTSRTSACGLFSVCYPRVSSA), 162–200 (VKAELRQYFRNLCSDDTPMVRRAAASKLGEFAKVLELDN), 201–239 (VKSEIIPMFSNLASDEQDSVRLLAVEACVNIAQLLPQED), 240–278 (LEALVMPTLRQAAEDKSWRVRYMVADKFTELHKAVGPEI), 279–321 (TKTD…RENV), 322–360 (IMTQILPCIKELVSDANQHVKSALASVIMGLSPILGKDS), 361–399 (TIEHLLPLFLAQLKDECPEVRLNIISNLDCVNEVIGIRQ), 400–438 (LSQSLLPAIVELAEDAKWRVRLAIIEYMPLLAGQLGVEF), 439–477 (FDEKLNSLCMAWLVDHVYAIREAATSNLKKLVEKFGKEW), 478–516 (AHATIIPKVLAMSGDPNYLHRMTTLFCINVLSEVCGQDI), 517–555 (TTKHMLPTVLRMAGDPVANVRFNVAKSLQKIGPILDNST), and 556–589 (LQSEVKPVLEKLTQDQDVDVKYFAQEALTVLSLA). Residues 8-399 (DSLYPIAVLI…CVNEVIGIRQ (392 aa)) form a PP2A subunit B binding region. The interval 47–321 (TRSELLPFLT…NLSADCRENV (275 aa)) is polyoma small and medium T antigens Binding. The interval 85 to 239 (YVHCLLPPLE…NIAQLLPQED (155 aa)) is SV40 small T antigen binding. The residue at position 280 (Lys280) is an N6-acetyllysine. The PP2A subunit C binding stretch occupies residues 400 to 589 (LSQSLLPAIV…QEALTVLSLA (190 aa)).

This sequence belongs to the phosphatase 2A regulatory subunit A family. As to quaternary structure, PP2A consists of a common heterodimeric core enzyme, composed of PPP2CA a 36 kDa catalytic subunit (subunit C) and PPP2R1A a 65 kDa constant regulatory subunit (PR65 or subunit A), that associates with a variety of regulatory subunits. Proteins that associate with the core dimer include three families of regulatory subunits B (the R2/B/PR55/B55, R3/B''/PR72/PR130/PR59 and R5/B'/B56 families), the 48 kDa variable regulatory subunit, viral proteins, and cell signaling molecules. Found in a complex with at least ARL2, PPP2CB, PPP2R1A, PPP2R2A, PPP2R5E and TBCD. Interacts with the PP2A C catalytic subunit PPP2CA. Interacts with the PP2A B subunit PPP2R2A. Interacts with the PP2A B subunit PPP2R5D. Interacts with FOXO1; the interaction dephosphorylates FOXO1 on AKT-mediated phosphorylation sites. Interacts with IPO9. Interacts with TP53 and SGO1. Interacts with PLA2G16; this interaction might decrease PP2A activity. Interacts with CTTNBP2NL. Interacts with GNA12; the interaction promotes protein phosphatase 2A activation causing dephosphorylation of MAPT. Interacts with CIP2A; this interaction stabilizes CIP2A. Interacts with PABIR1/FAM122A. Interacts with ADCY8; antagonizes interaction between ADCY8 and calmodulin. Interacts with CRTC3 (when phosphorylated at 'Ser-391'). Interacts with SPRY2. Part of the core of STRIPAK complexes composed of PP2A catalytic and scaffolding subunits, the striatins (PP2A regulatory subunits), the striatin-associated proteins MOB4, STRIP1 and STRIP2, PDCD10 and members of the STE20 kinases, such as STK24 and STK26. Component of the Integrator-PP2A (INTAC) complex, composed of the Integrator core complex and protein phosphatase 2A subunits PPP2CA and PPP2R1A.

The protein localises to the cytoplasm. It localises to the nucleus. The protein resides in the chromosome. Its subcellular location is the centromere. It is found in the lateral cell membrane. The protein localises to the cell projection. It localises to the dendrite. The PR65 subunit of protein phosphatase 2A serves as a scaffolding molecule to coordinate the assembly of the catalytic subunit and a variable regulatory B subunit. Upon interaction with GNA12 promotes dephosphorylation of microtubule associated protein TAU/MAPT. Required for proper chromosome segregation and for centromeric localization of SGO1 in mitosis. Together with RACK1 adapter, mediates dephosphorylation of AKT1 at 'Ser-473', preventing AKT1 activation and AKT-mTOR signaling pathway. Dephosphorylation of AKT1 is essential for regulatory T-cells (Treg) homeostasis and stability. Part of the striatin-interacting phosphatase and kinase (STRIPAK) complexes. STRIPAK complexes have critical roles in protein (de)phosphorylation and are regulators of multiple signaling pathways including Hippo, MAPK, nuclear receptor and cytoskeleton remodeling. Different types of STRIPAK complexes are involved in a variety of biological processes such as cell growth, differentiation, apoptosis, metabolism and immune regulation. Key mediator of a quality checkpoint during transcription elongation as part of the Integrator-PP2A (INTAC) complex. The INTAC complex drives premature transcription termination of transcripts that are unfavorably configured for transcriptional elongation: within the INTAC complex, acts as a scaffolding subunit for PPP2CA, which catalyzes dephosphorylation of the C-terminal domain (CTD) of Pol II subunit POLR2A/RPB1 and SUPT5H/SPT5, thereby preventing transcriptional elongation. Regulates the recruitment of the SKA complex to kinetochores. This is Serine/threonine-protein phosphatase 2A 65 kDa regulatory subunit A alpha isoform (PPP2R1A) from Bos taurus (Bovine).